Here is a 291-residue protein sequence, read N- to C-terminus: MLKETVDGLNIKPDGVYVDVTFGGGGHSKEILSRLGPEGKLFGFDQDEDAWENALPDERFTLIQENFRYIKRFLRFNGIKKVDGILADLGVSSHQFDVPERGFSTRFDAELDMRMSKKNDLTAFNIVNEYDETNLRRIFAEYGELGNALAIARAIIEAREKEKIVNTEDLKQVLARFLPNNKAHKILAQIYQSIRIEVNQEMDVLKEFLEQSLEVLDQGGRLSVISYHSLEDRLVKRFMKNGLFEGEPEKDFFGRFEVPFKLIGKMIIPSNQEIKINNRARSAKLRIAEKK.

S-adenosyl-L-methionine contacts are provided by residues 25 to 27, D45, F73, D88, and Q95; that span reads GGH.

It belongs to the methyltransferase superfamily. RsmH family.

The protein resides in the cytoplasm. The enzyme catalyses cytidine(1402) in 16S rRNA + S-adenosyl-L-methionine = N(4)-methylcytidine(1402) in 16S rRNA + S-adenosyl-L-homocysteine + H(+). Functionally, specifically methylates the N4 position of cytidine in position 1402 (C1402) of 16S rRNA. In Flavobacterium psychrophilum (strain ATCC 49511 / DSM 21280 / CIP 103535 / JIP02/86), this protein is Ribosomal RNA small subunit methyltransferase H.